The following is a 1561-amino-acid chain: Sterile alpha motif domain-containing protein 9-like (1561 aa).

An SAM domain is found at 14–79 (WTKEHVRKWV…RMYNKLISSP (66 aa)). The tract at residues 78–157 (SPESHNQDSR…DNKPKPEQMS (80 aa)) is disordered. 2 stretches are compositionally biased toward basic and acidic residues: residues 82–107 (HNQD…KNEE) and 142–153 (VTKDMEDNKPKP).

As to quaternary structure, interacts with EEA1.

It is found in the early endosome. It localises to the mitochondrion. In terms of biological role, may be involved in endosome fusion. Mediates down-regulation of growth factor signaling via internalization of growth factor receptors. The sequence is that of Sterile alpha motif domain-containing protein 9-like (Samd9l) from Mus musculus (Mouse).